We begin with the raw amino-acid sequence, 319 residues long: sn-1-specific diacylglycerol lipase ABHD11 (319 aa).

The N-terminal 28 residues, 1–28, are a transit peptide targeting the mitochondrion; it reads MTLKLAVLRQIFQGSKGWHLWQHWRAFY. The 236-residue stretch at 69-304 folds into the AB hydrolase-1 domain; the sequence is PPLVLLHGLF…GAGHWVHADK (236 aa). Catalysis depends on charge relay system residues S143, E239, and H298.

The protein belongs to the AB hydrolase superfamily. Phosphorylated.

It is found in the mitochondrion. The protein resides in the mitochondrion matrix. It catalyses the reaction 1-octadecanoyl-2-(5Z,8Z,11Z,14Z-eicosatetraenoyl)-sn-glycerol + H2O = 2-(5Z,8Z,11Z,14Z-eicosatetraenoyl)-glycerol + octadecanoate + H(+). The catalysed reaction is a 1,2-diacyl-sn-glycerol + H2O = a 2-acylglycerol + a fatty acid + H(+). The enzyme catalyses a 1,3-diacyl-sn-glycerol + H2O = a 1-acyl-sn-glycerol + a fatty acid + H(+). It carries out the reaction 1-octadecanoyl-2-(9Z-octadecenoyl)-sn-glycerol + H2O = 2-(9Z-octadecenoyl)-glycerol + octadecanoate + H(+). It catalyses the reaction 1-octadecanoyl-2-(4Z,7Z,10Z,13Z,16Z,19Z-docosahexaenoyl)-sn-glycerol + H2O = 2-(4Z,7Z,10Z,13Z,16Z,19Z-docosahexaenoyl)-glycerol + octadecanoate + H(+). The catalysed reaction is 1,2-didecanoylglycerol + H2O = decanoylglycerol + decanoate + H(+). In terms of biological role, catalyzes the hydrolysis of diacylglycerol in vitro and may function as a key regulator in lipid metabolism, namely by regulating the intracellular levels of diacylglycerol. 1,2-diacyl-sn-glycerols are the preferred substrate over 1,3-diacyl-sn-glycerols. The enzyme hydrolyzes stearate in preference to palmitate from the sn-1 position of 1,2-diacyl-sn-glycerols. In Xenopus tropicalis (Western clawed frog), this protein is sn-1-specific diacylglycerol lipase ABHD11.